The chain runs to 666 residues: Probable potassium transport system protein Kup (666 aa).

A run of 12 helical transmembrane segments spans residues 16–36 (GFII…LYTM), 58–78 (ISLI…LIAL), 100–120 (PWLI…GALT), 141–161 (IYQN…VLFG), 165–185 (FGTG…FSFL), 221–241 (IFIL…YSDL), 253–273 (WPFV…WILA), 292–312 (LTVY…QALI), 343–363 (LYIP…VLYF), 373–393 (YGLA…YYLI), 399–419 (PFLA…FFWA), and 424–444 (FMHG…VMFI).

Belongs to the HAK/KUP transporter (TC 2.A.72) family.

Its subcellular location is the cell membrane. The catalysed reaction is K(+)(in) + H(+)(in) = K(+)(out) + H(+)(out). Its function is as follows. Transport of potassium into the cell. Likely operates as a K(+):H(+) symporter. The polypeptide is Probable potassium transport system protein Kup (Streptococcus pyogenes serotype M18 (strain MGAS8232)).